We begin with the raw amino-acid sequence, 979 residues long: Protein argonaute PNH1 (979 aa).

The tract at residues 1–95 (MLEVLDMAPP…GGRAGAGPGP (95 aa)) is disordered. Low complexity predominate over residues 54-67 (AETAAATAAVAPPE). A compositionally biased stretch (basic residues) spans 77 to 86 (GRRRGGRGRG). Residues 333–446 (PVIEFVAQIL…LPMEACKIVE (114 aa)) enclose the PAZ domain. In terms of domain architecture, Piwi spans 620 to 941 (LLLAILPDNN…AAFRARFYME (322 aa)).

It belongs to the argonaute family. Ago subfamily.

It is found in the cytoplasm. Probably involved in the RNA silencing pathway. May bind to short RNAs such as microRNAs (miRNAs) or short interfering RNAs (siRNAs), and represses the translation of mRNAs which are complementary to them. Plays a role in the maintenance of the indeterminate state of the stem cells in the shoot apical meristem (SAM). Regulates leaf formation through vascular development and may be involved in determining the central domain of the leaf founder region. This is Protein argonaute PNH1 (PHN1) from Oryza sativa subsp. japonica (Rice).